Consider the following 95-residue polypeptide: Putative RelE-like toxin protein (95 aa).

This sequence belongs to the RelE toxin family.

In terms of biological role, toxic component of a type II toxin-antitoxin (TA) system. The chain is Putative RelE-like toxin protein from Escherichia coli.